The following is a 95-amino-acid chain: CRISPR-associated endoribonuclease Cas2 (95 aa).

Asp10 contributes to the Mg(2+) binding site.

Belongs to the CRISPR-associated endoribonuclease Cas2 protein family. In terms of assembly, homodimer, forms a heterotetramer with a Cas1 homodimer. Mg(2+) is required as a cofactor.

CRISPR (clustered regularly interspaced short palindromic repeat), is an adaptive immune system that provides protection against mobile genetic elements (viruses, transposable elements and conjugative plasmids). CRISPR clusters contain sequences complementary to antecedent mobile elements and target invading nucleic acids. CRISPR clusters are transcribed and processed into CRISPR RNA (crRNA). Functions as a ssRNA-specific endoribonuclease. Involved in the integration of spacer DNA into the CRISPR cassette. The protein is CRISPR-associated endoribonuclease Cas2 of Geobacter sulfurreducens (strain ATCC 51573 / DSM 12127 / PCA).